The sequence spans 468 residues: Phenylalanine--tRNA ligase alpha subunit (468 aa).

L-phenylalanine-binding positions include Thr311, 350–352, and Phe390; that span reads QLD. Mg(2+) is bound at residue Glu392.

This sequence belongs to the class-II aminoacyl-tRNA synthetase family. Phe-tRNA synthetase alpha subunit type 2 subfamily. In terms of assembly, tetramer of two alpha and two beta subunits. Mg(2+) serves as cofactor.

It localises to the cytoplasm. It carries out the reaction tRNA(Phe) + L-phenylalanine + ATP = L-phenylalanyl-tRNA(Phe) + AMP + diphosphate + H(+). This chain is Phenylalanine--tRNA ligase alpha subunit, found in Saccharolobus solfataricus (strain ATCC 35092 / DSM 1617 / JCM 11322 / P2) (Sulfolobus solfataricus).